The following is a 719-amino-acid chain: ATP-dependent RNA helicase p62 (719 aa).

The interval 94-234 (AQSQRAFRDS…GSQDLPMRPV (141 aa)) is disordered. Basic and acidic residues-rich tracts occupy residues 99-108 (AFRDSSKPDS) and 137-171 (EEIK…DRRG). Gly residues predominate over residues 172–188 (GGGGGNRFGGGGGGGDY). Positions 194 to 205 (GRVEKRRDDRGG) are enriched in basic and acidic residues. Gly residues predominate over residues 206–226 (GNRFGGGGGFGDRRGGGGGGS). The Q motif motif lies at 281 to 309 (QDFSEVHLPDYVMKEIRRQGYKAPTAIQA). Residues 312 to 487 (WPIAMSGSNF…EDFLGNYIQI (176 aa)) form the Helicase ATP-binding domain. 325-332 (AKTGSGKT) is a binding site for ATP. Residues 435 to 438 (DEAD) carry the DEAD box motif. One can recognise a Helicase C-terminal domain in the interval 519–664 (LLSDIYDTSE…EINPALENLA (146 aa)). Residues 689–719 (GGGFKKGSLSNGRGFGGGGGGGGEGRHSRFD) form a disordered region. A compositionally biased stretch (gly residues) spans 701 to 711 (RGFGGGGGGGG).

It belongs to the DEAD box helicase family. DDX5/DBP2 subfamily. In terms of assembly, interacts with Fmr1 to form the RNA-induced silencing complex (RISC), a ribonucleoprotein (RNP) complex involved in translation regulation, other components of the complex are RpL5, RpL11, AGO2 and Dcr-1.

The protein localises to the nucleus. Its subcellular location is the nucleolus. It is found in the cytoplasm. It localises to the cytosol. It carries out the reaction ATP + H2O = ADP + phosphate + H(+). In terms of biological role, as an RNA helicase, unwinds RNA and alters RNA structures through ATP binding and hydrolysis. Involved in multiple cellular processes, including pre-mRNA splicing, alternative splicing, rRNA processing and miRNA processing, as well as transcription regulation. Plays a role in innate immunity. Specifically restricts bunyavirus infection, including Rift Valley fever virus (RVFV) or La Crosse virus (LACV), but not vesicular stomatitis virus (VSV), in an interferon- and DROSHA-independent manner. This chain is ATP-dependent RNA helicase p62 (Rm62), found in Drosophila melanogaster (Fruit fly).